Here is a 358-residue protein sequence, read N- to C-terminus: Phenylalanine--tRNA ligase alpha subunit (358 aa).

E258 provides a ligand contact to Mg(2+).

Belongs to the class-II aminoacyl-tRNA synthetase family. Phe-tRNA synthetase alpha subunit type 1 subfamily. As to quaternary structure, tetramer of two alpha and two beta subunits. The cofactor is Mg(2+).

Its subcellular location is the cytoplasm. The catalysed reaction is tRNA(Phe) + L-phenylalanine + ATP = L-phenylalanyl-tRNA(Phe) + AMP + diphosphate + H(+). This chain is Phenylalanine--tRNA ligase alpha subunit, found in Rhodospirillum rubrum (strain ATCC 11170 / ATH 1.1.1 / DSM 467 / LMG 4362 / NCIMB 8255 / S1).